The primary structure comprises 579 residues: Vitamin B6 transporter TPN1 (579 aa).

12 helical membrane-spanning segments follow: residues 99-119, 123-143, 158-178, 199-219, 222-242, 275-295, 303-323, 363-383, 395-415, 422-442, 520-540, and 546-566; these read TGGL…GLSF, LASS…CSIM, LFGW…VMGW, PLWV…IFGI, VIKV…LLYI, LCYS…ILFP, IFCL…ILGL, VVVL…SAAF, IPRW…ALIG, ILGN…ILLF, FAFI…YWIG, and FGEY…GVVY.

This sequence belongs to the purine-cytosine permease (2.A.39) family.

It is found in the membrane. Its function is as follows. Thiamine-regulated, high affinity import carrier of pyridoxine, pyridoxal and pyridoxamine. The protein is Vitamin B6 transporter TPN1 (TPN1) of Saccharomyces cerevisiae (Baker's yeast).